Consider the following 290-residue polypeptide: Probable ATP-dependent kinase TDA10 (290 aa).

Position 38–45 (38–45 (GPQGSGKS)) interacts with ATP.

It belongs to the GLYK kinase family.

The protein resides in the cytoplasm. It localises to the nucleus. Functionally, ATP-dependent kinase whose specificity is not yet known. This is Probable ATP-dependent kinase TDA10 (TDA10) from Saccharomyces cerevisiae (strain ATCC 204508 / S288c) (Baker's yeast).